The chain runs to 313 residues: MDFELFILGSSSATPSKGRYQSAQLLKIHNDYFMIDCGEAAQYQLSRYKLNHTKISHIFISHLHGDHFFGLVGLLSTMNLYGRKNPIHVFGPPGLDEIIQIQLKYSETLLQFPLHYTTLENEGSEHILDHPLVDVYTIPLEHRIRCNGFLFKEKPKSYKLNKSKLPEDLSLLEIAQLKQGIDVYDENGNVKALVREICMPALKSRSYAYCSDTKVNEQYFPYIKGVDLLYHESTFLDELADRAAKTYHTTAKQAAQVAKEAEAGKLIIGHFSSRYYDTEPFLLEASSIFKHTYLGTEGSSFYVSDRISHEDNS.

Zn(2+) is bound by residues histidine 62, histidine 64, aspartate 66, histidine 67, histidine 142, aspartate 212, and histidine 270. The active-site Proton acceptor is the aspartate 66.

The protein belongs to the RNase Z family. As to quaternary structure, homodimer. The cofactor is Zn(2+).

The enzyme catalyses Endonucleolytic cleavage of RNA, removing extra 3' nucleotides from tRNA precursor, generating 3' termini of tRNAs. A 3'-hydroxy group is left at the tRNA terminus and a 5'-phosphoryl group is left at the trailer molecule.. Its function is as follows. Zinc phosphodiesterase, which displays some tRNA 3'-processing endonuclease activity. Probably involved in tRNA maturation, by removing a 3'-trailer from precursor tRNA. This chain is Ribonuclease Z, found in Cytophaga hutchinsonii (strain ATCC 33406 / DSM 1761 / CIP 103989 / NBRC 15051 / NCIMB 9469 / D465).